The chain runs to 278 residues: Delta(3,5)-Delta(2,4)-dienoyl-CoA isomerase, peroxisomal (278 aa).

At methionine 1 the chain carries N-acetylmethionine. Residues 69–73 (SGIDL) and glycine 128 each bind substrate. Residues 276–278 (AKL) carry the Microbody targeting signal motif.

This sequence belongs to the enoyl-CoA hydratase/isomerase family. Expressed in roots, leaves, stems and flowers.

It localises to the peroxisome. It carries out the reaction a (3E,5Z)-dienoyl-CoA = a (2E,4E)-(5,6-saturated)-dienoyl-CoA. It participates in lipid metabolism; fatty acid beta-oxidation. Converts 3,5-dienoyl-CoAs to the corresponding 2,4-dienoyl-CoAs. Involved in degradation of unsaturated fatty acids. In Arabidopsis thaliana (Mouse-ear cress), this protein is Delta(3,5)-Delta(2,4)-dienoyl-CoA isomerase, peroxisomal.